A 533-amino-acid chain; its full sequence is GMP synthase [glutamine-hydrolyzing] (533 aa).

The Glutamine amidotransferase type-1 domain maps to 25–215 (SIVIFDFGSQ…VFNICKCHAN (191 aa)). The active-site Nucleophile is the Cys102. Residues His189 and Glu191 contribute to the active site. One can recognise a GMPS ATP-PPase domain in the interval 216-408 (WTMGNYIQES…LGLPDEMIWR (193 aa)). 243 to 249 (SGGVDSA) contacts ATP.

Homodimer.

It carries out the reaction XMP + L-glutamine + ATP + H2O = GMP + L-glutamate + AMP + diphosphate + 2 H(+). It participates in purine metabolism; GMP biosynthesis; GMP from XMP (L-Gln route): step 1/1. In terms of biological role, catalyzes the synthesis of GMP from XMP. The polypeptide is GMP synthase [glutamine-hydrolyzing] (Dehalococcoides mccartyi (strain CBDB1)).